We begin with the raw amino-acid sequence, 1657 residues long: MGLQARRWASGSRGAAGPRRGVLQLLPLPLPLPLLLLLLLRPGAGRAAAQGEAEAPTLYLWKTGPWGRCMGDECGPGGIQTRAVWCAHVEGWTTLHTNCKQAERPNNQQNCFKVCDWHKELYDWRLGPWNQCQPVISKSLEKPLECIKGEEGIQVREIACIQKDKDIPAEDIICEYFEPKPLLEQACLIPCQQDCIVSEFSAWSECSKTCGSGLQHRTRHVVAPPQFGGSGCPNLTEFQVCQSSPCEAEELRYSLHVGPWSTCSMPHSRQVRQARRRGKNKEREKDRSKGVKDPEARELIKKKRNRNRQNRQENKYWDIQIGYQTREVMCINKTGKAADLSFCQQEKLPMTFQSCVITKECQVSEWSEWSPCSKTCHDMVSPAGTRVRTRTIRQFPIGSEKECPEFEEKEPCLSQGDGVVPCATYGWRTTEWTECRVDPLLSQQDKRRGNQTALCGGGIQTREVYCVQANENLLSQLSTHKNKEASKPMDLKLCTGPIPNTTQLCHIPCPTECEVSPWSAWGPCTYENCNDQQGKKGFKLRKRRITNEPTGGSGVTGNCPHLLEAIPCEEPACYDWKAVRLGNCEPDNGKECGPGTQVQEVVCINSDGEEVDRQLCRDAIFPIPVACDAPCPKDCVLSTWSTWSSCSHTCSGKTTEGKQIRARSILAYAGEEGGIRCPNSSALQEVRSCNEHPCTVYHWQTGPWGQCIEDTSVSSFNTTTTWNGEASCSVGMQTRKVICVRVNVGQVGPKKCPESLRPETVRPCLLPCKKDCIVTPYSDWTSCPSSCKEGDSSIRKQSRHRVIIQLPANGGRDCTDPLYEEKACEAPQACQSYRWKTHKWRRCQLVPWSVQQDSPGAQEGCGPGRQARAITCRKQDGGQAGIHECLQYAGPVPALTQACQIPCQDDCQLTSWSKFSSCNGDCGAVRTRKRTLVGKSKKKEKCKNSHLYPLIETQYCPCDKYNAQPVGNWSDCILPEGKVEVLLGMKVQGDIKECGQGYRYQAMACYDQNGRLVETSRCNSHGYIEEACIIPCPSDCKLSEWSNWSRCSKSCGSGVKVRSKWLREKPYNGGRPCPKLDHVNQAQVYEVVPCHSDCNQYLWVTEPWSICKVTFVNMRENCGEGVQTRKVRCMQNTADGPSEHVEDYLCDPEEMPLGSRVCKLPCPEDCVISEWGPWTQCVLPCNQSSFRQRSADPIRQPADEGRSCPNAVEKEPCNLNKNCYHYDYNVTDWSTCQLSEKAVCGNGIKTRMLDCVRSDGKSVDLKYCEALGLEKNWQMNTSCMVECPVNCQLSDWSPWSECSQTCGLTGKMIRRRTVTQPFQGDGRPCPSLMDQSKPCPVKPCYRWQYGQWSPCQVQEAQCGEGTRTRNISCVVSDGSADDFSKVVDEEFCADIELIIDGNKNMVLEESCSQPCPGDCYLKDWSSWSLCQLTCVNGEDLGFGGIQVRSRPVIIQELENQHLCPEQMLETKSCYDGQCYEYKWMASAWKGSSRTVWCQRSDGINVTGGCLVMSQPDADRSCNPPCSQPHSYCSETKTCHCEEGYTEVMSSNSTLEQCTLIPVVVLPTMEDKRGDVKTSRAVHPTQPSSNPAGRGRTWFLQPFGPDGRLKTWVYGVAAGAFVLLIFIVSMIYLACKKPKKPQRRQNNRLKPLTLAYDGDADM.

A signal peptide spans 1–47 (MGLQARRWASGSRGAAGPRRGVLQLLPLPLPLPLLLLLLLRPGAGRA). Residues 48-1607 (AAQGEAEAPT…FGPDGRLKTW (1560 aa)) are Extracellular-facing. TSP type-1 domains are found at residues 57 to 116 (TLYL…KVCD), 120 to 192 (ELYD…IPCQ), and 194 to 247 (DCIV…SPCE). Residue asparagine 234 is glycosylated (N-linked (GlcNAc...) asparagine). A disordered region spans residues 265–311 (MPHSRQVRQARRRGKNKEREKDRSKGVKDPEARELIKKKRNRNRQNR). Residues 267 to 315 (HSRQVRQARRRGKNKEREKDRSKGVKDPEARELIKKKRNRNRQNRQENK) are a coiled coil. A compositionally biased stretch (basic residues) spans 269–280 (RQVRQARRRGKN). Over residues 281 to 299 (KEREKDRSKGVKDPEAREL) the composition is skewed to basic and acidic residues. Over residues 300–309 (IKKKRNRNRQ) the composition is skewed to basic residues. N-linked (GlcNAc...) asparagine glycosylation occurs at asparagine 332. TSP type-1 domains lie at 360–416 (ECQV…LSQG), 423–510 (ATYG…IPCP), 512–574 (ECEV…PACY), 634–695 (DCVL…HPCT), 696–769 (VYHW…LPCK), 771–831 (DCIV…QACQ), 832–904 (SYRW…IPCQ), 906–959 (DCQL…CPCD), 960–1033 (KYNA…IPCP), 1035–1095 (DCKL…SDCN), 1096–1163 (QYLW…LPCP), 1166–1220 (CVIS…KNCY), 1221–1284 (HYDY…VECP), 1286–1341 (NCQL…KPCY), 1342–1412 (RWQY…QPCP), and 1414–1475 (DCYL…GQCY). Disulfide bonds link cysteine 435–cysteine 505, cysteine 455–cysteine 509, and cysteine 466–cysteine 494. Asparagine 450 carries N-linked (GlcNAc...) asparagine glycosylation. Asparagine 500 carries N-linked (GlcNAc...) asparagine glycosylation. Cystine bridges form between cysteine 635-cysteine 677 and cysteine 646-cysteine 650. Asparagine 679 carries N-linked (GlcNAc...) asparagine glycosylation. 7 disulfide bridges follow: cysteine 689–cysteine 694, cysteine 707–cysteine 764, cysteine 728–cysteine 768, cysteine 739–cysteine 752, cysteine 772–cysteine 814, cysteine 783–cysteine 787, and cysteine 824–cysteine 830. N-linked (GlcNAc...) asparagine glycosylation occurs at asparagine 717. The N-linked (GlcNAc...) asparagine glycan is linked to asparagine 968. 6 cysteine pairs are disulfide-bonded: cysteine 972–cysteine 1028, cysteine 994–cysteine 1032, cysteine 1005–cysteine 1018, cysteine 1036–cysteine 1073, cysteine 1047–cysteine 1051, and cysteine 1090–cysteine 1094. A glycan (N-linked (GlcNAc...) asparagine) is linked at asparagine 1043. N-linked (GlcNAc...) asparagine glycosylation occurs at asparagine 1182. A disulfide bond links cysteine 1213 and cysteine 1219. Asparagine 1225 carries an N-linked (GlcNAc...) asparagine glycan. Cystine bridges form between cysteine 1232/cysteine 1279, cysteine 1240/cysteine 1283, cysteine 1251/cysteine 1264, cysteine 1287/cysteine 1325, cysteine 1298/cysteine 1302, cysteine 1335/cysteine 1340, cysteine 1351/cysteine 1407, cysteine 1358/cysteine 1411, cysteine 1369/cysteine 1388, cysteine 1415/cysteine 1459, cysteine 1426/cysteine 1430, and cysteine 1469/cysteine 1474. Asparagine 1276 carries N-linked (GlcNAc...) asparagine glycosylation. The N-linked (GlcNAc...) asparagine glycan is linked to asparagine 1366. Residues asparagine 1500 and asparagine 1547 are each glycosylated (N-linked (GlcNAc...) asparagine). Residues 1570 to 1591 (DVKTSRAVHPTQPSSNPAGRGR) are disordered. Residues 1608-1628 (VYGVAAGAFVLLIFIVSMIYL) form a helical membrane-spanning segment. Topologically, residues 1629-1657 (ACKKPKKPQRRQNNRLKPLTLAYDGDADM) are cytoplasmic.

Proteolytic cleavage in the extracellular region generates a 210 kDa soluble form. Post-translationally, extensively N-glycosylated. Detected on kidney podocytes along the glomerular capillary wall (at protein level).

It localises to the cell membrane. The protein resides in the cell projection. The protein localises to the secreted. Its function is as follows. Plays a role in actin cytoskeleton rearrangement. The soluble form promotes endothelial cell migration and filopodia formation during sprouting angiogenesis via a FAK-dependent mechanism. The protein is Thrombospondin type-1 domain-containing protein 7A (THSD7A) of Homo sapiens (Human).